Consider the following 366-residue polypeptide: MIRTEEMLLNVGPQHPSTHGVFRLVIKIDGEIIKEATPVIGYLHRGTEKIAESLQYTQIIPYTDRMDYLSAMTNNYVICHAVETMIGLEIPERAEYLRVLAMELGRIASHLVWWGTNLLDIGAVSPFLYAFREREMIINLLNELCGARLTFNYMRVGGVKWDAPDGWIEKVEEFVPYMREQLAGYHDLVSGNEIFLNRVKGVGIYSAEEAISYSLSGANLRCTGVNWDLRKDEPYSIYNRFDFDIPVGSVGDAWDRYVCRMQEIEESLKIVEQAVQQFPKEGAVLAKVPKIIKAPKGEAFVRIESPRGEIGCYIASDGKKEPYRLKFRRPSFYNLQILPKLLKGENIANLITILGGVDIVLGEVDG.

This sequence belongs to the complex I 49 kDa subunit family. As to quaternary structure, NDH-1 is composed of 14 different subunits. Subunits NuoB, C, D, E, F, and G constitute the peripheral sector of the complex.

Its subcellular location is the cell membrane. It catalyses the reaction a quinone + NADH + 5 H(+)(in) = a quinol + NAD(+) + 4 H(+)(out). Functionally, NDH-1 shuttles electrons from NADH, via FMN and iron-sulfur (Fe-S) centers, to quinones in the respiratory chain. The immediate electron acceptor for the enzyme in this species is believed to be a menaquinone. Couples the redox reaction to proton translocation (for every two electrons transferred, four hydrogen ions are translocated across the cytoplasmic membrane), and thus conserves the redox energy in a proton gradient. This Bacillus thuringiensis (strain Al Hakam) protein is NADH-quinone oxidoreductase subunit D.